Here is a 2643-residue protein sequence, read N- to C-terminus: Ankyrin repeat domain-containing protein 11 (2643 aa).

Disordered stretches follow at residues 1–90 (MPKG…KEPV) and 128–170 (SANS…RGET). Basic and acidic residues-rich tracts occupy residues 21-54 (MVEKQTGKKDKDKVSLTKTPKLDRSDGGKEVRER) and 69-90 (EQKDSDTEKQGPERKRIKKEPV). Polar residues predominate over residues 128-155 (SANSPVDTTPKHPSQSTVCQKGTPNSAS). Basic and acidic residues predominate over residues 156–170 (KTKDKVNKRNERGET). ANK repeat units lie at residues 167–196 (RGETRLHRAAIRGDARRIKELISEGADVNV), 200–229 (AGWTALHEACNRGYYDIAKQLLAAGAEVNT), 233–262 (DDDTPLHDAANNGHYKVVKLLLRYGGNPQQ), and 266–292 (KGETPLKVANSPTMVNLLLGKGTYTSS). S276 carries the phosphoserine modification. A disordered region spans residues 289–365 (YTSSEESSTE…DRVPPVDDKH (77 aa)). Residues 295 to 305 (SSTESSEEEDA) show a composition bias toward acidic residues. Positions 309 to 320 (APSSSVDGNNTD) are enriched in polar residues. 2 stretches are compositionally biased toward basic and acidic residues: residues 322–335 (EFEKGLKLKAKNPE) and 356–365 (DRVPPVDDKH). Residue S408 is modified to Phosphoserine. The residue at position 410 (T410) is a Phosphothreonine. Phosphoserine is present on S411. Disordered regions lie at residues 423 to 504 (GEKL…CLKG), 517 to 651 (SLSA…GQCS), and 727 to 805 (DANK…DKEK). Residues 438 to 451 (KARESSSSRQQKEK) are compositionally biased toward basic and acidic residues. Residues 452–462 (NKLKKKRKKET) are compositionally biased toward basic residues. The span at 463–475 (KGKEVRFGKRSDK) shows a compositional bias: basic and acidic residues. A compositionally biased stretch (acidic residues) spans 484–494 (ESSESEEDDGD). The segment covering 517-528 (SLSASSTSSHGS) has biased composition (low complexity). The span at 537–550 (GHTDQHTKHWRTDN) shows a compositional bias: basic and acidic residues. A compositionally biased stretch (polar residues) spans 557–574 (PAWSEVSSLSDSSRTGLT). A compositionally biased stretch (low complexity) spans 575–588 (SESDCSSEGSSVES). Basic residues-rich tracts occupy residues 591-602 (PTRRKQEHRKRG) and 633-646 (VKKHKTKHKHKHKE). S838 bears the Phosphoserine mark. Basic and acidic residues-rich tracts occupy residues 918–931 (KNSEKRRDQTEKHK) and 938–962 (SEKDKKRRESAEGGRDRRDGRIRSE). Disordered regions lie at residues 918–962 (KNSE…IRSE), 977–1037 (SFKD…STLD), and 1051–1074 (EKKDGKEKHKDIHSKDRKASFDQL). S1070 is subject to Phosphoserine. T1111 carries the phosphothreonine modification. S1114 carries the phosphoserine modification. 2 disordered regions span residues 1114–1388 (SEDE…KDAS) and 1420–1711 (LFSS…TPSC). 8 stretches are compositionally biased toward basic and acidic residues: residues 1133-1297 (DTQR…DKIS), 1326-1343 (AEDKARDSACLSEKLREK), 1355-1388 (KSHERERAKKEKAEKKEKSEDYKDSISSVRKDAS), 1420-1444 (LFSSEKKDRSDPEREPAKRIEKELK), 1464-1535 (RERW…KGDS), 1546-1564 (VPSRDSGKKDSRPREKLLG), 1577-1587 (LSQKDLEIEER), and 1595-1640 (MKQM…KVKE). S1676 is modified (phosphoserine). Residues 1678-1695 (RTEQSRPTGVPTPTSVVS) show a composition bias toward polar residues. Phosphoserine occurs at positions 1777 and 1832. Residues Y1835 and Y1836 each carry the phosphotyrosine modification. A phosphoserine mark is found at S1837 and S1844. Disordered regions lie at residues 1863 to 1900 (PPDSVFSNLPPKSSPSPRGELLSPAIEGTLPPDLGLPL), 1981 to 2027 (SPKH…EVKD), and 2111 to 2386 (HEAF…STQQ). 2 positions are modified to phosphoserine: S1981 and S2139. 2 stretches are compositionally biased toward pro residues: residues 2150–2160 (PVPPAESPPGP) and 2175–2184 (EEPPAPPPQE). Over residues 2273-2284 (SAEASCVVAAAE) the composition is skewed to low complexity. A compositionally biased stretch (basic and acidic residues) spans 2297–2315 (PEPKPTSEVPKAPKVEEVP). Residues 2349 to 2643 (AKGRASEEED…VNDDFVLLPA (295 aa)) form an important for protein degradation region. Over residues 2371–2386 (RSSQQLQQQLNTSTQQ) the composition is skewed to low complexity.

Interacts with the PAS region of the p160 coactivators. Subject to proteasomal degradation which is probably essential to regulate its activity.

It localises to the nucleus. In terms of biological role, chromatin regulator which modulates histone acetylation and gene expression in neural precursor cells. May recruit histone deacetylases (HDACs) to the p160 coactivators/nuclear receptor complex to inhibit ligand-dependent transactivation. Has a role in proliferation and development of cortical neural precursors. May also regulate bone homeostasis. This Mus musculus (Mouse) protein is Ankyrin repeat domain-containing protein 11.